A 99-amino-acid chain; its full sequence is Essential MCU regulator, mitochondrial (99 aa).

The N-terminal 39 residues, 1-39 (MAARVGVLSVAGFRAAARAGGLLRASKQSSAVSHVPCRT), are a transit peptide targeting the mitochondrion. The Mitochondrial matrix portion of the chain corresponds to 40 to 57 (AIATSAGTVLPKPEKVSF). The chain crosses the membrane as a helical span at residues 58–77 (GLLRVFTVVIPFLYIGTLIS). The Mitochondrial intermembrane portion of the chain corresponds to 78–99 (KNFAALLEEHDIFVPEDDDDDD).

This sequence belongs to the SMDT1/EMRE family. As to quaternary structure, component of the uniplex complex.

It is found in the mitochondrion inner membrane. In terms of biological role, essential regulatory subunit of the mitochondrial calcium uniporter complex (uniplex), a complex that mediates calcium uptake into mitochondria. Required to bridge the calcium-sensing proteins micu1 with the calcium-conducting subunit mcu. Acts by mediating activation of mcu and retention of micu1 to the mcu pore, in order to ensure tight regulation of the uniplex complex and appropriate responses to intracellular calcium signaling. The polypeptide is Essential MCU regulator, mitochondrial (Xenopus tropicalis (Western clawed frog)).